A 247-amino-acid chain; its full sequence is Uridylate kinase (247 aa).

14–17 (KLSG) is a binding site for ATP. The tract at residues 22–27 (GERGVG) is involved in allosteric activation by GTP. Residue Gly56 coordinates UMP. ATP is bound by residues Gly57 and Arg61. UMP contacts are provided by residues Asp76 and 137–144 (IGSPYFST). ATP-binding residues include Asn165, Tyr171, and Asp174.

It belongs to the UMP kinase family. In terms of assembly, homohexamer.

The protein localises to the cytoplasm. It carries out the reaction UMP + ATP = UDP + ADP. The protein operates within pyrimidine metabolism; CTP biosynthesis via de novo pathway; UDP from UMP (UMPK route): step 1/1. Allosterically activated by GTP. Inhibited by UTP. Catalyzes the reversible phosphorylation of UMP to UDP. This is Uridylate kinase from Streptococcus pneumoniae (strain ATCC BAA-255 / R6).